A 221-amino-acid chain; its full sequence is UPF0502 protein Sputcn32_1644 (221 aa).

The protein belongs to the UPF0502 family.

The chain is UPF0502 protein Sputcn32_1644 from Shewanella putrefaciens (strain CN-32 / ATCC BAA-453).